A 262-amino-acid polypeptide reads, in one-letter code: Trypsin eta (262 aa).

Residues 1 to 22 form the signal peptide; it reads MNKVILRILAVLFLLGIYAVSA. The propeptide at 23-27 is activation peptide; it reads QSDGR. Residues 28-259 enclose the Peptidase S1 domain; the sequence is IVGGADTSSY…YKDWIAKQRT (232 aa). Cys59 and Cys75 form a disulfide bridge. Catalysis depends on charge relay system residues His74 and Asp120. 2 cysteine pairs are disulfide-bonded: Cys185–Cys200 and Cys211–Cys235. Residue Ser215 is the Charge relay system of the active site.

It belongs to the peptidase S1 family.

Its subcellular location is the secreted. It localises to the extracellular space. It carries out the reaction Preferential cleavage: Arg-|-Xaa, Lys-|-Xaa.. The protein is Trypsin eta (etaTry) of Drosophila melanogaster (Fruit fly).